The sequence spans 113 residues: Nucleoid-associated protein CLH_3225 (113 aa).

Residues 1–14 (MAKGGFPGGFGGGN) are compositionally biased toward gly residues. The tract at residues 1-31 (MAKGGFPGGFGGGNMNNLMKQAQKLQKQMED) is disordered.

This sequence belongs to the YbaB/EbfC family. As to quaternary structure, homodimer.

It localises to the cytoplasm. The protein resides in the nucleoid. Functionally, binds to DNA and alters its conformation. May be involved in regulation of gene expression, nucleoid organization and DNA protection. The sequence is that of Nucleoid-associated protein CLH_3225 from Clostridium botulinum (strain Alaska E43 / Type E3).